The sequence spans 504 residues: Alpha,alpha-trehalose-phosphate synthase [UDP-forming] (504 aa).

Positions 97 and 151 each coordinate D-glucose 6-phosphate. 2 residues coordinate UDP: Arg287 and Lys292. UDP-alpha-D-glucose is bound by residues Arg287 and Lys292. Arg325 is a binding site for D-glucose 6-phosphate. 386-394 (DGMNLVSYE) is a binding site for UDP-alpha-D-glucose. A UDP-binding site is contributed by 390 to 394 (LVSYE). The interval 482-504 (AGKLPTKETPVNGETSKLETSSQ) is disordered. Over residues 493–504 (NGETSKLETSSQ) the composition is skewed to polar residues.

Belongs to the glycosyltransferase 20 family.

The catalysed reaction is D-glucose 6-phosphate + UDP-alpha-D-glucose = alpha,alpha-trehalose 6-phosphate + UDP + H(+). It functions in the pathway carbohydrate biosynthesis. Functionally, synthase catalytic subunit of the trehalose synthase complex that catalyzes the production of trehalose from glucose-6-phosphate and UDP-alpha-D-glucose in a two step process. In Emericella nidulans (strain FGSC A4 / ATCC 38163 / CBS 112.46 / NRRL 194 / M139) (Aspergillus nidulans), this protein is Alpha,alpha-trehalose-phosphate synthase [UDP-forming] (tpsA).